A 237-amino-acid polypeptide reads, in one-letter code: Probable septum site-determining protein MinC (237 aa).

It belongs to the MinC family. Interacts with MinD and FtsZ.

Its function is as follows. Cell division inhibitor that blocks the formation of polar Z ring septums. Rapidly oscillates between the poles of the cell to destabilize FtsZ filaments that have formed before they mature into polar Z rings. Prevents FtsZ polymerization. This chain is Probable septum site-determining protein MinC, found in Buchnera aphidicola subsp. Acyrthosiphon pisum (strain 5A).